A 201-amino-acid chain; its full sequence is MEQLTARQTEVLQIITRHLETCGYPPTLREIAAKLGISGTLGVMKHLEALEKKGYLRRQEGSTRGITLCNQNQATSLPIVGVVRAGLLHPAIQDIEGHFAIDRSQLASGGAFFLRVKGDSMIHAHIVEGDLALVRPQPDASNRDIVVAMVEGEATLKRFYREADRIRLQPENPNYEPIIIQKGEQEVSIVGKVVGIYRQME.

The H-T-H motif DNA-binding region spans 28–48; it reads LREIAAKLGISGTLGVMKHLE. Residues S120 and K157 each act as for autocatalytic cleavage activity in the active site.

It belongs to the peptidase S24 family. As to quaternary structure, homodimer.

It carries out the reaction Hydrolysis of Ala-|-Gly bond in repressor LexA.. Represses a number of genes involved in the response to DNA damage (SOS response), including recA and lexA. In the presence of single-stranded DNA, RecA interacts with LexA causing an autocatalytic cleavage which disrupts the DNA-binding part of LexA, leading to derepression of the SOS regulon and eventually DNA repair. This Geobacter sp. (strain M21) protein is LexA repressor.